A 407-amino-acid polypeptide reads, in one-letter code: Histone-lysine N-methyltransferase SUV39H2 (407 aa).

The 59-residue stretch at 43–101 (YEVEYLCDYKVEEGKEYYLVKWKGWPESSNTWEPQKNLKCPKLLENFLSDKDEYLSRMK) folds into the Chromo domain. The 59-residue stretch at 185 to 243 (TGCECSDCPAEKCCPKEAGFILAYNKQKKLKIQPGLPIYECNSFCRCGPDCPNRIVQKG) folds into the Pre-SET domain. C187, C189, C192, C197, C198, C225, C229, C231, and C235 together coordinate Zn(2+). Residues 246-369 (YSLCIFRTNN…AGEELTFDYQ (124 aa)) form the SET domain. Residues 257-259 (RGW), Y300, and 326-327 (NH) contribute to the S-adenosyl-L-methionine site. Residues C329, C395, C397, and C402 each contribute to the Zn(2+) site. Residues 391–407 (IRTVCKCGAVCCRGYLN) enclose the Post-SET domain.

It belongs to the class V-like SAM-binding methyltransferase superfamily. Histone-lysine methyltransferase family. Suvar3-9 subfamily.

It localises to the nucleus. Its subcellular location is the chromosome. The protein resides in the centromere. It catalyses the reaction L-lysyl(9)-[histone H3] + 3 S-adenosyl-L-methionine = N(6),N(6),N(6)-trimethyl-L-lysyl(9)-[histone H3] + 3 S-adenosyl-L-homocysteine + 3 H(+). Its function is as follows. Histone methyltransferase that specifically trimethylates 'Lys-9' of histone H3 using monomethylated H3 'Lys-9' as substrate. H3 'Lys-9' trimethylation represents a specific tag for epigenetic transcriptional repression by recruiting HP1 (CBX1, CBX3 and/or CBX5) proteins to methylated histones. Mainly functions in heterochromatin regions, thereby playing a central role in the establishment of constitutive heterochromatin at pericentric and telomere regions. H3 'Lys-9' trimethylation is also required to direct DNA methylation at pericentric repeats. SUV39H1 is targeted to histone H3 via its interaction with RB1 and is involved in many processes. In Gallus gallus (Chicken), this protein is Histone-lysine N-methyltransferase SUV39H2 (SUV39H2).